We begin with the raw amino-acid sequence, 444 residues long: Phosphoglucosamine mutase (444 aa).

Serine 102 functions as the Phosphoserine intermediate in the catalytic mechanism. Residues serine 102, aspartate 241, aspartate 243, and aspartate 245 each coordinate Mg(2+). Serine 102 carries the phosphoserine modification.

Belongs to the phosphohexose mutase family. The cofactor is Mg(2+). Post-translationally, activated by phosphorylation.

It catalyses the reaction alpha-D-glucosamine 1-phosphate = D-glucosamine 6-phosphate. Functionally, catalyzes the conversion of glucosamine-6-phosphate to glucosamine-1-phosphate. The sequence is that of Phosphoglucosamine mutase from Haemophilus ducreyi (strain 35000HP / ATCC 700724).